A 1093-amino-acid polypeptide reads, in one-letter code: Synaptopodin-2 (1093 aa).

Positions 1-180 are interaction with VPS18; it reads MGTGDFICIS…PDSQRGRVAE (180 aa). Residues 6–88 enclose the PDZ domain; it reads FICISMTGGA…SLQMLIKRPS (83 aa). Disordered regions lie at residues 144 to 174 and 211 to 233; these read ENQR…PDSQ and ASGP…DPNL. The span at 222–233 shows a compositional bias: basic and acidic residues; the sequence is EKSKSPDPDPNL. 4 positions are modified to phosphoserine: S274, S310, S329, and S330. Residues 329 to 369 form a disordered region; the sequence is SSEGTEQGEDPRSEKDHSRPHKHRARHARLRRSESLSEKQV. At T333 the chain carries Phosphothreonine. Positions 346 to 358 are enriched in basic residues; it reads SRPHKHRARHARL. Positions 359 to 369 are enriched in basic and acidic residues; sequence RRSESLSEKQV. Residues 398 to 406 carry the Nuclear localization signal motif; the sequence is KKRRRRARK. Interaction with ACTN2 stretches follow at residues 481-663, 664-924, and 901-1093; these read MEML…FYDS, SERI…PPVA, and QSPT…VVEE. Disordered regions lie at residues 507 to 803 and 834 to 870; these read AQKE…GTVV and AVAS…GMSG. F-actin binding stretches follow at residues 534–663 and 664–803; these read TSYQ…FYDS and SERI…GTVV. Phosphoserine occurs at positions 548, 549, and 551. Polar residues-rich tracts occupy residues 565–579 and 595–611; these read PQQN…TANI and SVNQ…NMTS. S604 carries the post-translational modification Phosphoserine. The segment at 607–811 is interaction with YWHAB; it reads RNMTSPIADF…VVSSIKIAQP (205 aa). T610 bears the Phosphothreonine mark. At S611 the chain carries Phosphoserine. Residues 615-626 form an interaction with BAG3 region; sequence DFPAPPPYSAVT. 2 stretches are compositionally biased toward pro residues: residues 617-630 and 644-655; these read PAPP…PPPD and AQPPPWPQPAPW. Residues 619 to 622 carry the PPPY motif motif; it reads PPPY. Phosphotyrosine is present on Y622. T626 is modified (phosphothreonine). The span at 663–674 shows a compositional bias: basic and acidic residues; sequence SSERIASRDERI. The tract at residues 664-916 is F-actin bundling activity; sequence SERIASRDER…LPASWKYSSN (253 aa). Residues S705 and S729 each carry the phosphoserine modification. Residues 751-900 form an actin binding region; sequence AKQKTPPPVA…DTVQAHAARA (150 aa). A phosphothreonine mark is found at T755 and T774. Residues 762–784 show a composition bias toward low complexity; that stretch reads KPAVKSSSSQPVTPVSPVWSPGV. 2 positions are modified to phosphoserine: S777 and S781. 2 stretches are compositionally biased toward polar residues: residues 793–803 and 835–853; these read PTSNPSKGTVV and VASQ…TVNA. The segment at 810–1093 is interaction with FLNC; the sequence is QPSYPPARPA…QVWKPSVVEE (284 aa). 3 positions are modified to phosphoserine: S902, S906, and S910. Positions 937 to 956 are disordered; it reads ALKSQPSAAQPSKMGKKKGK. Residues 1000–1019 are interaction with ZYX; it reads LAMKQALPPRPVNAASPTNV. S1015 is modified (phosphoserine). Positions 1041–1050 are enriched in low complexity; the sequence is SSPVSASPVP. The disordered stretch occupies residues 1041 to 1064; the sequence is SSPVSASPVPVGIPTSPKQESASS. S1056 is subject to Phosphoserine.

This sequence belongs to the synaptopodin family. May self-associate in muscle cells under oxidative stress. Binds F-actin. Interacts with ACTN2; ACTN2 is proposed to anchor SYOP2 at Z lines in mature myocytes. Interacts with AKAP6, PPP3CA and CAMK2A. Interacts (phosphorylated form) with YWHAB; YWHAB competes with ACTN2 for interaction with SYNPO2. Interacts with KPNA2; mediating nuclear import of SYNOP2; dependent on interaction with YWHAB. Interacts with IPO13; may be implicated in SYNOP2 nuclear import. Interacts with ZYX, FLNC, ILK. Interacts with BAG3 (via WW 1 domain). May associate with the CASA complex consisting of HSPA8, HSPB8 and BAG3. Interacts with VPS18. In terms of processing, phosphorylated by PKA, and by CaMK2 at multiple sites. Dephosphorylated by calcineurin; abrogating interaction with YWHAB and impairing nuclear import. Phosphorylated by ILK. In terms of tissue distribution, expressed in heart muscle. Isoform 5 is specifically expressed in skeletal muscle.

Its subcellular location is the nucleus. The protein resides in the cytoplasm. The protein localises to the cytoskeleton. It is found in the myofibril. It localises to the sarcomere. Its subcellular location is the z line. The protein resides in the cell junction. The protein localises to the focal adhesion. In terms of biological role, has an actin-binding and actin-bundling activity. Can induce the formation of F-actin networks in an isoform-specific manner. At the sarcomeric Z lines is proposed to act as adapter protein that links nascent myofibers to the sarcolemma via ZYX and may play a role in early assembly and stabilization of the Z lines. Involved in autophagosome formation. May play a role in chaperone-assisted selective autophagy (CASA) involved in Z lines maintenance in striated muscle under mechanical tension; may link the client-processing CASA chaperone machinery to a membrane-tethering and fusion complex providing autophagosome membranes. Involved in regulation of cell migration. May be a tumor suppressor. Its function is as follows. Involved in regulation of cell migration. Can induce formation of thick, irregular actin bundles in the cell body. Involved in regulation of cell migration. Can induce long, well-organized actin bundles frequently orientated in parallel along the long axis of the cell showing characteristics of contractile ventral stress fibers. Functionally, involved in regulation of cell migration. Can induce an amorphous actin meshwork throughout the cell body containing a mixture of long and short, randomly organized thick and thin actin bundles. In terms of biological role, can induce long, well-organized actin bundles frequently orientated in parallel along the long axis of the cell showing characteristics of contractile ventral stress fibers. Its function is as follows. Involved in regulation of cell migration in part dependent on the Rho-ROCK cascade; can promote formation of nascent focal adhesions, actin bundles at the leading cell edge and lamellipodia. Can induce formation of thick, irregular actin bundles in the cell body; the induced actin network is associated with enhanced cell migration in vitro. The protein is Synaptopodin-2 (SYNPO2) of Homo sapiens (Human).